We begin with the raw amino-acid sequence, 324 residues long: Holliday junction branch migration complex subunit RuvB (324 aa).

Residues 1 to 180 (MKSISCGKEY…FGIPLHLEFY (180 aa)) are large ATPase domain (RuvB-L). Residues isoleucine 19, arginine 20, glycine 61, lysine 64, threonine 65, threonine 66, 127 to 129 (EDF), arginine 170, tyrosine 180, and arginine 217 contribute to the ATP site. Threonine 65 is a Mg(2+) binding site. A small ATPAse domain (RuvB-S) region spans residues 181–251 (SFEELVNIIK…VADSVLLKLG (71 aa)). Positions 254 to 324 (KMGLNKLDMN…TDQAKEYLSL (71 aa)) are head domain (RuvB-H). Residues arginine 307 and arginine 312 each coordinate DNA.

It belongs to the RuvB family. Homohexamer. Forms an RuvA(8)-RuvB(12)-Holliday junction (HJ) complex. HJ DNA is sandwiched between 2 RuvA tetramers; dsDNA enters through RuvA and exits via RuvB. An RuvB hexamer assembles on each DNA strand where it exits the tetramer. Each RuvB hexamer is contacted by two RuvA subunits (via domain III) on 2 adjacent RuvB subunits; this complex drives branch migration. In the full resolvosome a probable DNA-RuvA(4)-RuvB(12)-RuvC(2) complex forms which resolves the HJ.

Its subcellular location is the cytoplasm. It carries out the reaction ATP + H2O = ADP + phosphate + H(+). Functionally, the RuvA-RuvB-RuvC complex processes Holliday junction (HJ) DNA during genetic recombination and DNA repair, while the RuvA-RuvB complex plays an important role in the rescue of blocked DNA replication forks via replication fork reversal (RFR). RuvA specifically binds to HJ cruciform DNA, conferring on it an open structure. The RuvB hexamer acts as an ATP-dependent pump, pulling dsDNA into and through the RuvAB complex. RuvB forms 2 homohexamers on either side of HJ DNA bound by 1 or 2 RuvA tetramers; 4 subunits per hexamer contact DNA at a time. Coordinated motions by a converter formed by DNA-disengaged RuvB subunits stimulates ATP hydrolysis and nucleotide exchange. Immobilization of the converter enables RuvB to convert the ATP-contained energy into a lever motion, pulling 2 nucleotides of DNA out of the RuvA tetramer per ATP hydrolyzed, thus driving DNA branch migration. The RuvB motors rotate together with the DNA substrate, which together with the progressing nucleotide cycle form the mechanistic basis for DNA recombination by continuous HJ branch migration. Branch migration allows RuvC to scan DNA until it finds its consensus sequence, where it cleaves and resolves cruciform DNA. The polypeptide is Holliday junction branch migration complex subunit RuvB (Wolbachia sp. subsp. Drosophila simulans (strain wRi)).